Reading from the N-terminus, the 565-residue chain is E3 ubiquitin-protein ligase ipaH7.8 (565 aa).

Positions 1 to 22 are disordered; it reads MFSVNNTHSSVSCSPSINSNST. The segment at 1–262 is interaction with target proteins; the sequence is MFSVNNTHSS…YHGPQIYFSM (262 aa). Over residues 9-22 the composition is skewed to low complexity; the sequence is SSVSCSPSINSNST. LRR repeat units lie at residues 58-79, 80-97, 98-119, 120-137, 138-157, 158-179, 180-199, 202-223, and 225-248; these read QEAV…PKHI, SALI…KLPA, FLKE…PESL, TTLS…VLPN, HLTS…ALPE, KLKF…PDKL, EILC…SDRN, RQKE…FSQL, and SSYR…QRLT. The tract at residues 263-270 is linker; it reads SDGQQNTL. Residues 271–565 are E3 ubiquitin-protein ligase catalytic domain; it reads HRPLADAVTA…SENGSRLHHS (295 aa). The 293-residue stretch at 273–565 folds into the NEL domain; the sequence is PLADAVTAWF…SENGSRLHHS (293 aa). Cys-357 (glycyl thioester intermediate) is an active-site residue.

Belongs to the LRR-containing bacterial E3 ligase family. In terms of processing, ubiquitinated in the presence of host E1 ubiquitin-activating enzyme, E2 ubiquitin-conjugating enzyme and ubiquitin.

The protein localises to the secreted. Its subcellular location is the host cytoplasm. The enzyme catalyses S-ubiquitinyl-[E2 ubiquitin-conjugating enzyme]-L-cysteine + [acceptor protein]-L-lysine = [E2 ubiquitin-conjugating enzyme]-L-cysteine + N(6)-ubiquitinyl-[acceptor protein]-L-lysine.. It functions in the pathway protein modification; protein ubiquitination. Its function is as follows. E3 ubiquitin ligase effector protein that interferes with host's innate immunity. Functions to alter host cell physiology and promote bacterial survival in host tissues. Catalyzes ubiquitination of human gasdermins GSDMB and GSDMD, promoting their degradation by the proteasome, thereby preventing cell death. In contrast, activates host cell pyroptosis in mouse cells: catalyzes ubiquitination of mouse Nlrp1b allele 1 protein, releasing the cleaved C-terminal part of Nlrp1b, which polymerizes and forms the Nlrp1b inflammasome followed by host cell pyroptosis. Does not catalyze ubiquitination of mouse GSDMD. The chain is E3 ubiquitin-protein ligase ipaH7.8 from Shigella flexneri.